The primary structure comprises 86 residues: Putative membrane protein insertion efficiency factor (86 aa).

The disordered stretch occupies residues A66 to H86.

This sequence belongs to the UPF0161 family.

The protein localises to the cell inner membrane. In terms of biological role, could be involved in insertion of integral membrane proteins into the membrane. The chain is Putative membrane protein insertion efficiency factor from Nitratidesulfovibrio vulgaris (strain ATCC 29579 / DSM 644 / CCUG 34227 / NCIMB 8303 / VKM B-1760 / Hildenborough) (Desulfovibrio vulgaris).